The chain runs to 307 residues: Ornithine carbamoyltransferase (307 aa).

Residues serine 50 to threonine 53, glutamine 77, arginine 101, and histidine 128 to glutamine 131 contribute to the carbamoyl phosphate site. L-ornithine-binding positions include asparagine 160, aspartate 224, and serine 228–methionine 229. Carbamoyl phosphate is bound by residues cysteine 264–leucine 265 and arginine 292.

Belongs to the aspartate/ornithine carbamoyltransferase superfamily. OTCase family.

It is found in the cytoplasm. It catalyses the reaction carbamoyl phosphate + L-ornithine = L-citrulline + phosphate + H(+). Its pathway is amino-acid biosynthesis; L-arginine biosynthesis; L-arginine from L-ornithine and carbamoyl phosphate: step 1/3. Its function is as follows. Reversibly catalyzes the transfer of the carbamoyl group from carbamoyl phosphate (CP) to the N(epsilon) atom of ornithine (ORN) to produce L-citrulline. The sequence is that of Ornithine carbamoyltransferase from Mycolicibacterium gilvum (strain PYR-GCK) (Mycobacterium gilvum (strain PYR-GCK)).